The sequence spans 274 residues: Aspartate/glutamate leucyltransferase (274 aa).

Belongs to the R-transferase family. Bpt subfamily.

The protein localises to the cytoplasm. The enzyme catalyses N-terminal L-glutamyl-[protein] + L-leucyl-tRNA(Leu) = N-terminal L-leucyl-L-glutamyl-[protein] + tRNA(Leu) + H(+). The catalysed reaction is N-terminal L-aspartyl-[protein] + L-leucyl-tRNA(Leu) = N-terminal L-leucyl-L-aspartyl-[protein] + tRNA(Leu) + H(+). Its function is as follows. Functions in the N-end rule pathway of protein degradation where it conjugates Leu from its aminoacyl-tRNA to the N-termini of proteins containing an N-terminal aspartate or glutamate. In Ruegeria sp. (strain TM1040) (Silicibacter sp.), this protein is Aspartate/glutamate leucyltransferase.